The following is a 95-amino-acid chain: Integration host factor subunit beta (95 aa).

Residues 56–95 (RAPRTGRNPKTGETVELDGKHVPHFKPGKELRDRVNESIA) form a disordered region. The span at 72–95 (LDGKHVPHFKPGKELRDRVNESIA) shows a compositional bias: basic and acidic residues.

This sequence belongs to the bacterial histone-like protein family. As to quaternary structure, heterodimer of an alpha and a beta chain.

In terms of biological role, this protein is one of the two subunits of integration host factor, a specific DNA-binding protein that functions in genetic recombination as well as in transcriptional and translational control. In Pseudoalteromonas translucida (strain TAC 125), this protein is Integration host factor subunit beta.